The following is a 514-amino-acid chain: UDP-N-acetylmuramate--L-alanine ligase (514 aa).

Residue 127–133 participates in ATP binding; it reads GTHGKTT. A compositionally biased stretch (low complexity) spans 495 to 505; sequence IGGTIPDIPGG. The tract at residues 495–514 is disordered; it reads IGGTIPDIPGGSTPDASAAG.

Belongs to the MurCDEF family.

It is found in the cytoplasm. The catalysed reaction is UDP-N-acetyl-alpha-D-muramate + L-alanine + ATP = UDP-N-acetyl-alpha-D-muramoyl-L-alanine + ADP + phosphate + H(+). It participates in cell wall biogenesis; peptidoglycan biosynthesis. Its function is as follows. Cell wall formation. In Salinispora tropica (strain ATCC BAA-916 / DSM 44818 / JCM 13857 / NBRC 105044 / CNB-440), this protein is UDP-N-acetylmuramate--L-alanine ligase.